Reading from the N-terminus, the 57-residue chain is Weak toxin CM-1b (57 aa).

4 disulfide bridges follow: C3–C19, C12–C37, C40–C49, and C50–C55.

The protein belongs to the three-finger toxin family. Short-chain subfamily. Orphan group XX sub-subfamily. In terms of tissue distribution, expressed by the venom gland.

The protein localises to the secreted. This chain is Weak toxin CM-1b, found in Hemachatus haemachatus (Rinkhals).